A 57-amino-acid chain; its full sequence is Large ribosomal subunit protein bL32 (57 aa).

Belongs to the bacterial ribosomal protein bL32 family.

The sequence is that of Large ribosomal subunit protein bL32 from Mycolicibacterium gilvum (strain PYR-GCK) (Mycobacterium gilvum (strain PYR-GCK)).